We begin with the raw amino-acid sequence, 509 residues long: ATP synthase subunit alpha (509 aa).

ATP is bound at residue 169–176 (GDRQTGKT).

This sequence belongs to the ATPase alpha/beta chains family. In terms of assembly, F-type ATPases have 2 components, CF(1) - the catalytic core - and CF(0) - the membrane proton channel. CF(1) has five subunits: alpha(3), beta(3), gamma(1), delta(1), epsilon(1). CF(0) has three main subunits: a(1), b(2) and c(9-12). The alpha and beta chains form an alternating ring which encloses part of the gamma chain. CF(1) is attached to CF(0) by a central stalk formed by the gamma and epsilon chains, while a peripheral stalk is formed by the delta and b chains.

Its subcellular location is the cell inner membrane. It catalyses the reaction ATP + H2O + 4 H(+)(in) = ADP + phosphate + 5 H(+)(out). Produces ATP from ADP in the presence of a proton gradient across the membrane. The alpha chain is a regulatory subunit. This Zymomonas mobilis subsp. mobilis (strain ATCC 31821 / ZM4 / CP4) protein is ATP synthase subunit alpha.